Reading from the N-terminus, the 318-residue chain is MPMINLLLLIMSILIAMAFLMLTERKILGHTQLRKGPNIVGPYGLLQPFADALKLFTKEPLKPSTSTITLYIISPALALTIALLLWTPLPMPIPLINLNLGLLFILAASSLTVYSILWSGWASNSNYALIGALRAVAQTISYEITLALILLSVLLMSGSFNLSALITTQEHSWLLLPSWPLALMWFISTLAETNRAPFDLTEGESELVSGFNTEYAAGPFALFFMAEYTNIILMNALTTMIFLGTTFNIHSPELYTTLFTIKTLLLTSLFLWIRSTYPRFRYDQLMHLLWKNFLPLTLALLMWHISVPIATSGIPPQT.

Helical transmembrane passes span 2–22, 76–96, 100–120, 146–166, 171–191, 222–242, 253–273, and 294–314; these read PMIN…FLML, ALAL…IPLI, LGLL…LWSG, LALI…SALI, HSWL…STLA, LFFM…TMIF, ELYT…FLWI, and LPLT…TSGI.

The protein belongs to the complex I subunit 1 family. In terms of assembly, core subunit of respiratory chain NADH dehydrogenase (Complex I) which is composed of 45 different subunits.

It localises to the mitochondrion inner membrane. The catalysed reaction is a ubiquinone + NADH + 5 H(+)(in) = a ubiquinol + NAD(+) + 4 H(+)(out). Core subunit of the mitochondrial membrane respiratory chain NADH dehydrogenase (Complex I) which catalyzes electron transfer from NADH through the respiratory chain, using ubiquinone as an electron acceptor. Essential for the catalytic activity and assembly of complex I. This is NADH-ubiquinone oxidoreductase chain 1 (MT-ND1) from Pongo abelii (Sumatran orangutan).